The primary structure comprises 552 residues: Urocanate hydratase (552 aa).

NAD(+) contacts are provided by residues 48 to 49 (GG), glutamine 126, 172 to 174 (GMG), glutamate 192, arginine 197, 238 to 239 (NA), 259 to 263 (QTSAH), 269 to 270 (YV), and tyrosine 318. Cysteine 406 is a catalytic residue. Residue glycine 488 participates in NAD(+) binding.

It belongs to the urocanase family. Requires NAD(+) as cofactor.

Its subcellular location is the cytoplasm. The enzyme catalyses 4-imidazolone-5-propanoate = trans-urocanate + H2O. Its pathway is amino-acid degradation; L-histidine degradation into L-glutamate; N-formimidoyl-L-glutamate from L-histidine: step 2/3. Its function is as follows. Catalyzes the conversion of urocanate to 4-imidazolone-5-propionate. This chain is Urocanate hydratase, found in Herpetosiphon aurantiacus (strain ATCC 23779 / DSM 785 / 114-95).